The chain runs to 152 residues: MIEDKKVIVQNKKALFNYFIEEILEAGIVLKGSEVQSLRQGKASIEESHASDNGHEVFLYNCHITEYEKANRFNHSTRRPRKLLLHAKEIKKIIGRIRIKGYTLVALSMYFNKKNKVKVELGIAKGKKLYDKRAAIKEKDWKKDQSRLIRQK.

It belongs to the SmpB family.

The protein localises to the cytoplasm. Required for rescue of stalled ribosomes mediated by trans-translation. Binds to transfer-messenger RNA (tmRNA), required for stable association of tmRNA with ribosomes. tmRNA and SmpB together mimic tRNA shape, replacing the anticodon stem-loop with SmpB. tmRNA is encoded by the ssrA gene; the 2 termini fold to resemble tRNA(Ala) and it encodes a 'tag peptide', a short internal open reading frame. During trans-translation Ala-aminoacylated tmRNA acts like a tRNA, entering the A-site of stalled ribosomes, displacing the stalled mRNA. The ribosome then switches to translate the ORF on the tmRNA; the nascent peptide is terminated with the 'tag peptide' encoded by the tmRNA and targeted for degradation. The ribosome is freed to recommence translation, which seems to be the essential function of trans-translation. The sequence is that of SsrA-binding protein from Rickettsia prowazekii (strain Madrid E).